Here is a 297-residue protein sequence, read N- to C-terminus: Large ribosomal subunit protein uL24m (297 aa).

The residue at position 2 (Ser2) is an N-acetylserine. Residues 63–96 form the KOW domain; sequence FIPGDRVVVMSGASKGNIAVIKSFDKRTNSFILD.

Belongs to the universal ribosomal protein uL24 family. Component of the mitochondrial large ribosomal subunit (mt-LSU). Mature yeast 74S mitochondrial ribosomes consist of a small (37S) and a large (54S) subunit. The 37S small subunit contains a 15S ribosomal RNA (15S mt-rRNA) and 34 different proteins. The 54S large subunit contains a 21S rRNA (21S mt-rRNA) and 46 different proteins. uL24m forms the wall of the exit tunnel.

Its subcellular location is the mitochondrion. Functionally, component of the mitochondrial ribosome (mitoribosome), a dedicated translation machinery responsible for the synthesis of mitochondrial genome-encoded proteins, including at least some of the essential transmembrane subunits of the mitochondrial respiratory chain. The mitoribosomes are attached to the mitochondrial inner membrane and translation products are cotranslationally integrated into the membrane. In Saccharomyces cerevisiae (strain ATCC 204508 / S288c) (Baker's yeast), this protein is Large ribosomal subunit protein uL24m (MRPL40).